Here is a 166-residue protein sequence, read N- to C-terminus: Lipoprotein signal peptidase (166 aa).

The next 4 membrane-spanning stretches (helical) occupy residues 9–29, 45–65, 71–91, and 100–120; these read ASGALAPWLGISLIVILFDQL, ALTSFFNLVLVYNRGAAFGFL, WQRWAFTALGVGATLVICFLL, and FSVSLALILGGALGNVIDRLV. Catalysis depends on residues Asp-126 and Asp-144. Residues 135–155 traverse the membrane as a helical segment; sequence WHFPAFNLADSAITIGAVLLI.

It belongs to the peptidase A8 family.

The protein resides in the cell inner membrane. It carries out the reaction Release of signal peptides from bacterial membrane prolipoproteins. Hydrolyzes -Xaa-Yaa-Zaa-|-(S,diacylglyceryl)Cys-, in which Xaa is hydrophobic (preferably Leu), and Yaa (Ala or Ser) and Zaa (Gly or Ala) have small, neutral side chains.. It participates in protein modification; lipoprotein biosynthesis (signal peptide cleavage). Its function is as follows. This protein specifically catalyzes the removal of signal peptides from prolipoproteins. The chain is Lipoprotein signal peptidase from Burkholderia cenocepacia (strain ATCC BAA-245 / DSM 16553 / LMG 16656 / NCTC 13227 / J2315 / CF5610) (Burkholderia cepacia (strain J2315)).